We begin with the raw amino-acid sequence, 724 residues long: Catalase-peroxidase (724 aa).

A cross-link (tryptophyl-tyrosyl-methioninium (Trp-Tyr) (with M-252)) is located at residues 98–226 (WHAAGTYRIA…LAAVMMGLIY (129 aa)). Catalysis depends on histidine 99, which acts as the Proton acceptor. Positions 226–252 (YVNPEGVDGNPDPLKTAHDIRVTFERM) form a cross-link, tryptophyl-tyrosyl-methioninium (Tyr-Met) (with W-98). Residue histidine 267 coordinates heme b.

Belongs to the peroxidase family. Peroxidase/catalase subfamily. As to quaternary structure, homodimer or homotetramer. It depends on heme b as a cofactor. Formation of the three residue Trp-Tyr-Met cross-link is important for the catalase, but not the peroxidase activity of the enzyme.

It carries out the reaction H2O2 + AH2 = A + 2 H2O. The enzyme catalyses 2 H2O2 = O2 + 2 H2O. Its function is as follows. Bifunctional enzyme with both catalase and broad-spectrum peroxidase activity. This Psychromonas ingrahamii (strain DSM 17664 / CCUG 51855 / 37) protein is Catalase-peroxidase.